A 472-amino-acid polypeptide reads, in one-letter code: ATP-dependent rRNA helicase rrp3 (472 aa).

Positions M1–K52 are disordered. A compositionally biased stretch (basic and acidic residues) spans A10–A24. The Q motif motif lies at K52 to A80. A Helicase ATP-binding domain is found at I83–V254. ATP is bound at residue A96–T103. Residues D202–D205 carry the DEAD box motif. The Helicase C-terminal domain occupies Y282 to M426. The disordered stretch occupies residues M443–G472. Residues S452–R462 show a composition bias toward basic residues.

The protein belongs to the DEAD box helicase family. DDX47/RRP3 subfamily. In terms of assembly, interacts with the SSU processome.

The protein resides in the nucleus. It catalyses the reaction ATP + H2O = ADP + phosphate + H(+). ATP-dependent rRNA helicase required for pre-ribosomal RNA processing. Involved in the maturation of the 35S-pre-rRNA and to its cleavage to mature 18S rRNA. The chain is ATP-dependent rRNA helicase rrp3 from Aspergillus oryzae (strain ATCC 42149 / RIB 40) (Yellow koji mold).